The primary structure comprises 254 residues: AA9 family lytic polysaccharide monooxygenase A (254 aa).

The N-terminal stretch at 1–19 is a signal peptide; that stretch reads MKYSILGLTALSFVASAAA. H20 contacts Cu(2+). Methylhistidine is present on H20. V28 serves as a coordination point for (1,4-beta-D-glucosyl)n. N52 carries an N-linked (GlcNAc...) asparagine glycan. A disulfide bond links C60 and C186. V66, V67, D77, and N86 together coordinate (1,4-beta-D-glucosyl)n. H97 is a Cu(2+) binding site. N129 carries an N-linked (GlcNAc...) asparagine glycan. The (1,4-beta-D-glucosyl)n site is built by V148 and R159. Positions 166 and 181 each coordinate O2. Cu(2+) is bound at residue Y183.

Belongs to the polysaccharide monooxygenase AA9 family. The cofactor is Cu(2+). Post-translationally, the catalytically essential N-terminal histidine His-20 is post-translationally modified by methylation to prevent protonation of the histidine side chain, and protect the critical active site of the enzyme from oxidative damage.

It is found in the secreted. It catalyses the reaction [(1-&gt;4)-beta-D-glucosyl]n+m + reduced acceptor + O2 = 4-dehydro-beta-D-glucosyl-[(1-&gt;4)-beta-D-glucosyl]n-1 + [(1-&gt;4)-beta-D-glucosyl]m + acceptor + H2O.. The polyphenol cinnamtannin B1 contained in methanolic extract of Cinnamomum cassia (cinnamon) acts as an inhibitor of catalytic activity. In terms of biological role, lytic polysaccharide monooxygenase (LPMO) that depolymerizes crystalline and amorphous polysaccharides via the oxidation of scissile alpha- or beta-(1-4)-glycosidic bonds, yielding C1 or C4 oxidation product. Catalysis by LPMOs requires the reduction of the active-site copper from Cu(II) to Cu(I) by a reducing agent and H(2)O(2) or O(2) as a cosubstrate. Is able to cleave phosphoric acid swollen cellulose (PASC) in the presence of a reducing agent, yielding a range of cellooligosaccharides dominated by cellobiose and cellotriose. Activity is less sensitive to the reducing agent potential when cleaving xylan, suggesting that distinct catalytic mechanisms exist for xylan and glucan cleavage. This Panus similis (Lentinoid fungus) protein is AA9 family lytic polysaccharide monooxygenase A.